The chain runs to 356 residues: Histidinol-phosphate aminotransferase 1 (356 aa).

Lys210 is modified (N6-(pyridoxal phosphate)lysine).

The protein belongs to the class-II pyridoxal-phosphate-dependent aminotransferase family. Histidinol-phosphate aminotransferase subfamily. In terms of assembly, homodimer. Pyridoxal 5'-phosphate serves as cofactor.

The enzyme catalyses L-histidinol phosphate + 2-oxoglutarate = 3-(imidazol-4-yl)-2-oxopropyl phosphate + L-glutamate. The protein operates within amino-acid biosynthesis; L-histidine biosynthesis; L-histidine from 5-phospho-alpha-D-ribose 1-diphosphate: step 7/9. In Hydrogenovibrio crunogenus (strain DSM 25203 / XCL-2) (Thiomicrospira crunogena), this protein is Histidinol-phosphate aminotransferase 1.